The chain runs to 283 residues: Gap junction beta-1 protein (283 aa).

The Cytoplasmic portion of the chain corresponds to 1 to 22; sequence MNWTGLYTLLSGVNRHSTAIGR. Residues 23–45 traverse the membrane as a helical segment; it reads VWLSVIFIFRIMVLVVAAESVWG. At 46-75 the chain is on the extracellular side; that stretch reads DEKSSFICNTLQPGCNSVCYDQFFPISHVR. Residues 76-95 traverse the membrane as a helical segment; sequence LWSLQLILVSTPALLVAMHV. Residues 96–130 lie on the Cytoplasmic side of the membrane; it reads AHQQHIEKKMLRLEGHGDPLHLEEVKRHKVHISGT. Residues 131–153 traverse the membrane as a helical segment; it reads LWWTYVISVVFRLLFEAVFMYVF. The Extracellular segment spans residues 154 to 191; sequence YLLYPGYAMVRLVKCDVYPCPNTVDCFVSRPTEKTVFT. A helical membrane pass occupies residues 192–214; that stretch reads VFMLAASGICIILNVAEVVYLII. Over 215–283 the chain is Cytoplasmic; the sequence is RACARRAQRR…AEKSDRCSAC (69 aa). S233, S258, S266, and S277 each carry phosphoserine.

It belongs to the connexin family. Beta-type (group I) subfamily. In terms of assembly, a connexon is composed of a hexamer of connexins. Interacts with CNST.

The protein localises to the cell membrane. The protein resides in the cell junction. It localises to the gap junction. In terms of biological role, one gap junction consists of a cluster of closely packed pairs of transmembrane channels, the connexons, through which materials of low MW diffuse from one cell to a neighboring cell. The polypeptide is Gap junction beta-1 protein (GJB1) (Homo sapiens (Human)).